Consider the following 314-residue polypeptide: 3'-5' exoribonuclease YhaM (314 aa).

In terms of domain architecture, HD spans His163–Lys279.

The protein belongs to the YhaM family.

Shows a 3'-5' exoribonuclease activity. The polypeptide is 3'-5' exoribonuclease YhaM (Bacillus anthracis (strain CDC 684 / NRRL 3495)).